The primary structure comprises 248 residues: Type III pantothenate kinase (248 aa).

8–15 (DAGNTRTK) is a binding site for ATP. Residues tyrosine 87 and 94–97 (GVDR) contribute to the substrate site. Catalysis depends on aspartate 96, which acts as the Proton acceptor. An ATP-binding site is contributed by threonine 119. Threonine 173 provides a ligand contact to substrate.

This sequence belongs to the type III pantothenate kinase family. Homodimer. It depends on NH4(+) as a cofactor. K(+) serves as cofactor.

The protein resides in the cytoplasm. It carries out the reaction (R)-pantothenate + ATP = (R)-4'-phosphopantothenate + ADP + H(+). The protein operates within cofactor biosynthesis; coenzyme A biosynthesis; CoA from (R)-pantothenate: step 1/5. In terms of biological role, catalyzes the phosphorylation of pantothenate (Pan), the first step in CoA biosynthesis. The polypeptide is Type III pantothenate kinase (Methylobacillus flagellatus (strain ATCC 51484 / DSM 6875 / VKM B-1610 / KT)).